Consider the following 447-residue polypeptide: DNA primase DnaG (447 aa).

The 75-residue stretch at 200–274 (DSIIVVEGRA…DIDYVARAPE (75 aa)) folds into the Toprim domain. Residues E206, D248, and D250 each coordinate Mg(2+). Residues 316-339 (ERRRGGARKQEYTKKGSLNPQPQV) are disordered.

Belongs to the archaeal DnaG primase family. Forms a ternary complex with MCM helicase and DNA. Component of the archaeal exosome complex. Mg(2+) serves as cofactor.

The catalysed reaction is ssDNA + n NTP = ssDNA/pppN(pN)n-1 hybrid + (n-1) diphosphate.. Functionally, RNA polymerase that catalyzes the synthesis of short RNA molecules used as primers for DNA polymerase during DNA replication. Also part of the exosome, which is a complex involved in RNA degradation. Acts as a poly(A)-binding protein that enhances the interaction between heteromeric, adenine-rich transcripts and the exosome. The polypeptide is DNA primase DnaG (Pyrococcus furiosus (strain ATCC 43587 / DSM 3638 / JCM 8422 / Vc1)).